The sequence spans 259 residues: Small ribosomal subunit protein eS1 (259 aa).

2 disordered regions span residues 1 to 23 (MAVG…KTAD) and 235 to 259 (ESKS…VDSV). Positions 8 to 19 (KVTKGGKKGGKK) are enriched in basic residues. Basic and acidic residues predominate over residues 246 to 259 (SRPDHYEPPKVDSV).

The protein belongs to the eukaryotic ribosomal protein eS1 family. As to quaternary structure, component of the small ribosomal subunit. Mature ribosomes consist of a small (40S) and a large (60S) subunit. The 40S subunit contains about 33 different proteins and 1 molecule of RNA (18S). The 60S subunit contains about 49 different proteins and 3 molecules of RNA (28S, 5.8S and 5S).

Its subcellular location is the cytoplasm. The protein is Small ribosomal subunit protein eS1 of Schistosoma japonicum (Blood fluke).